A 214-amino-acid polypeptide reads, in one-letter code: Large ribosomal subunit protein bL25 (214 aa).

The protein belongs to the bacterial ribosomal protein bL25 family. CTC subfamily. As to quaternary structure, part of the 50S ribosomal subunit; part of the 5S rRNA/L5/L18/L25 subcomplex. Contacts the 5S rRNA. Binds to the 5S rRNA independently of L5 and L18.

Its function is as follows. This is one of the proteins that binds to the 5S RNA in the ribosome where it forms part of the central protuberance. The chain is Large ribosomal subunit protein bL25 from Polynucleobacter necessarius subsp. necessarius (strain STIR1).